An 870-amino-acid polypeptide reads, in one-letter code: Leucine--tRNA ligase (870 aa).

Positions 42-52 (PYPSGKLHMGH) match the 'HIGH' region motif. A 'KMSKS' region motif is present at residues 629 to 633 (KMSKS). Lys-632 is an ATP binding site.

The protein belongs to the class-I aminoacyl-tRNA synthetase family.

Its subcellular location is the cytoplasm. The enzyme catalyses tRNA(Leu) + L-leucine + ATP = L-leucyl-tRNA(Leu) + AMP + diphosphate. In Dechloromonas aromatica (strain RCB), this protein is Leucine--tRNA ligase.